The following is a 309-amino-acid chain: 2-dehydro-3-deoxygluconokinase (309 aa).

Substrate is bound by residues 34-38 (GAEVN), tyrosine 89, 103-105 (YYR), and arginine 167. ATP is bound by residues 165–167 (NYR), serine 193, 219–225 (KRGAKGA), 248–251 (GAGD), and asparagine 275. Aspartate 251 is a substrate binding site. Aspartate 251 serves as the catalytic Proton acceptor. Residue aspartate 287 coordinates substrate.

Belongs to the carbohydrate kinase pfkB family. In terms of assembly, homohexamer; trimer of dimers.

The enzyme catalyses 2-dehydro-3-deoxy-D-gluconate + ATP = 2-dehydro-3-deoxy-6-phospho-D-gluconate + ADP + H(+). The protein operates within carbohydrate acid metabolism; 2-dehydro-3-deoxy-D-gluconate degradation; D-glyceraldehyde 3-phosphate and pyruvate from 2-dehydro-3-deoxy-D-gluconate: step 1/2. Its function is as follows. Involved in the degradation of glucose via the semi-phosphorylative Entner-Doudoroff pathway. Catalyzes the phosphorylation of 2-keto-3-deoxygluconate (KDG) to produce 2-keto-3-deoxy-6-phosphogluconate (KDPG). The protein is 2-dehydro-3-deoxygluconokinase (kdgK) of Thermus thermophilus (strain ATCC 27634 / DSM 579 / HB8).